A 413-amino-acid chain; its full sequence is MSSIRLPPPVVIPESQSTVDVYIIDTTSYMSMVPASSFVEPLVSGFETLNAGSYAFLIEHTSSKPSKHDTMVFDLGVRKDWEHLPDTFVAAVKEEGWSIDVQTDVASILRDNGQDLKSVGAIIWSHWHFDHVGDPQTFPSSTDLIVGPGFKQGVMPGWPTAKDSHVNETAWQGRKLIEIDFSGEAALDIGRFQAYDFYGDGSFYLLNSPGHAVGHMSALARTTADPPSFMLLGGDIAHHCGEFRPSPYTPLPNMITPNPLSNTLLACPGRLFLSIHPWKDPERPFFDPTVGPGWHDEGVLAKDSIDKLIEADAYDNIFPVVAHDMTLVGTVDLYPNKANNWMSRGWKEDTRWGFCGDFTPLDEEMVARNGQVEVLEGHHEVRDSAQDPKVTSIVHMESTDVDKKAKLHDPSFV.

Zn(2+) contacts are provided by His-126, His-128, Asp-130, His-131, His-211, Asp-235, and His-323.

It belongs to the metallo-beta-lactamase superfamily.

The protein operates within xenobiotic degradation. Functionally, gamma-lactamase; part of the Fusarium detoxification of benzoxazolinone cluster involved in the degradation of benzoxazolinones produced by the host plant. Maize, wheat, and rye produce the 2 benzoxazinone phytoanticipins 2,4-dihy-droxy-7-methoxy-1,4-benzoxazin-3-one (DIMBOA) and 2,4-dihydroxy-1,4-benzoxazin-3-one (DIBOA) that, due to their inherent instability once released, spontaneously degrade to the more stable corresponding benzoxazolinones, 6-methoxy-2-benzoxazolinone (MBOA) and 2-benzoxazolinone (BOA), respectively. The first step in the detoxification of benzoxazolinones involves the hydrolysis of the cyclic ester bond of benzoxazolinones by the gamma-lactamase FDB1 to aminophenols. FDB1 is able to convert BOA into 2-aminophenol (2-AP), as well as MBOA into 5-methoxy-2-aminophenol (2-AMP). The N-malonyltransferase FDB2 then metabolizes aminophenols via N-malonylation to non-toxic malonamic acids. FDB2 converts 2-AP into N-(2-hydroxyphenyl) malonamic acid (HPMA) and 2-AMP into N-(2-hydroxy-4-methoxyphenyl) malonamic acid (HMPMA). The cluster also contains 2 transcription factors (FDB3 and FPSE_08121), an aldo-keto reductase (FPSE_08125) that possibly associates with a ketone component of BOA and MBOA degradation, an esterase (FPSE_08126), an acyl-CoA transferase (FPSE_08120), a solute carrier protein (FPSE_08119) and a transmembrane transporter (FPSE_08127) proposed to shuttle metabolites of benzoxazolinone degradation. In Fusarium pseudograminearum (strain CS3096) (Wheat and barley crown-rot fungus), this protein is Gamma-lactamase FDB1.